Reading from the N-terminus, the 392-residue chain is Protein FAM53C (392 aa).

The residue at position 1 (M1) is an N-acetylmethionine. The interval 76–120 (LHLRPPSPGSSPQEQSLSQVLSPEPPDPEKLPVPPAPPSKRHCRS) is disordered. Residues 85–97 (SSPQEQSLSQVLS) are compositionally biased toward low complexity. Residues S122 and S162 each carry the phosphoserine modification. Disordered regions lie at residues 141–167 (LWTPIKHRGSGGGGGPQVPHQSPPKRV) and 201–294 (DSSH…EDPR). Polar residues predominate over residues 201 to 215 (DSSHPSAASPQSGSW). Residues S232, S234, S255, and S273 each carry the phosphoserine modification. The segment covering 241 to 256 (ASRFLPSARSSPASSP) has biased composition (low complexity). Basic and acidic residues predominate over residues 278-294 (LDARKAGVKRRHEEDPR). S299 bears the Phosphoserine mark.

It belongs to the FAM53 family.

This is Protein FAM53C from Bos taurus (Bovine).